The following is a 555-amino-acid chain: Steroid-22-oyl-CoA synthetase (555 aa).

The protein belongs to the ATP-dependent AMP-binding enzyme family.

It carries out the reaction 3-oxochol-4-en-22-oate + ATP + CoA = 3-oxochol-4-en-22-oyl-CoA + AMP + diphosphate. The catalysed reaction is 3-hydroxy-9-oxo-9,10-seco-chola-1,3,5-trien-22-oate + ATP + CoA = 3-hydroxy-9-oxo-9,10-seco-chola-1,3,5-trien-22-oyl-CoA + AMP + diphosphate. The protein operates within steroid metabolism. Functionally, involved in cholate catabolism. Catalyzes the ATP-dependent formation of CoA thioesters of steroids with isopropanoyl side chains, likely occurring as degradation intermediates. Can use 4-BNC, HSBNC and HIDP as substrate. This chain is Steroid-22-oyl-CoA synthetase, found in Rhodococcus jostii (strain RHA1).